We begin with the raw amino-acid sequence, 60 residues long: Metallothionein (60 aa).

The beta stretch occupies residues 1–28 (MDPCECSKTGNCTCGGSCTCKNCSCTSC). A divalent metal cation-binding residues include Cys-4, Cys-6, Cys-12, Cys-14, Cys-18, Cys-20, Cys-23, Cys-25, Cys-28, Cys-32, Cys-33, Cys-35, Cys-36, Cys-40, Cys-43, Cys-47, Cys-49, Cys-54, Cys-58, and Cys-59. The segment at 29–60 (KKSCCSCCPSGCSKCASGCVCKGKTCDTSCCQ) is alpha.

It belongs to the metallothionein superfamily. Type 1 family.

In terms of biological role, metallothioneins have a high content of cysteine residues that bind various heavy metals. This chain is Metallothionein (mt), found in Gobiomorphus cotidianus (New Zealand common bully).